A 347-amino-acid chain; its full sequence is GMP reductase (347 aa).

108 to 131 (ADFEKTKQILAQSPALNFVCIDVA) is an NADP(+) binding site. Positions 181 and 183 each coordinate K(+). Cys186 serves as the catalytic Thioimidate intermediate. An NADP(+)-binding site is contributed by 216–239 (IVSDGGCTMPGDVAKAFGGGADFV).

Belongs to the IMPDH/GMPR family. GuaC type 1 subfamily. As to quaternary structure, homotetramer.

The catalysed reaction is IMP + NH4(+) + NADP(+) = GMP + NADPH + 2 H(+). Functionally, catalyzes the irreversible NADPH-dependent deamination of GMP to IMP. It functions in the conversion of nucleobase, nucleoside and nucleotide derivatives of G to A nucleotides, and in maintaining the intracellular balance of A and G nucleotides. This is GMP reductase from Citrobacter koseri (strain ATCC BAA-895 / CDC 4225-83 / SGSC4696).